Consider the following 84-residue polypeptide: Sulfur carrier protein TusA (84 aa).

Cys-21 serves as the catalytic Cysteine persulfide intermediate.

Belongs to the sulfur carrier protein TusA family.

The protein localises to the cytoplasm. Functionally, sulfur carrier protein which probably makes part of a sulfur-relay system. This Pseudomonas syringae pv. syringae (strain B728a) protein is Sulfur carrier protein TusA.